A 258-amino-acid chain; its full sequence is Snake venom serine protease HS114 (258 aa).

The first 18 residues, Met1–Ala18, serve as a signal peptide directing secretion. A propeptide spanning residues Gln19 to Leu24 is cleaved from the precursor. Positions Val25 to Ala249 constitute a Peptidase S1 domain. 6 cysteine pairs are disulfide-bonded: Cys31/Cys163, Cys50/Cys66, Cys98/Cys256, Cys142/Cys210, Cys174/Cys189, and Cys200/Cys225. Asn44 carries N-linked (GlcNAc...) asparagine glycosylation. Residues His65 and Asp110 each act as charge relay system in the active site. Residue Ser204 is the Charge relay system of the active site.

The protein belongs to the peptidase S1 family. Snake venom subfamily. As to quaternary structure, monomer. In terms of processing, N-glycosylated. Contains approximately 10% carbohydrates. As to expression, expressed by the venom gland.

The protein localises to the secreted. With respect to regulation, inhibited by benzamidine, PMSF, leupeptin, SDS and DTT, but not by EDTA, and commercial antivenom. Its function is as follows. Snake venom serine protease that shows non-specific action on fibrinogen. It preferentially degrades fibrinogen Aalpha (FGA), releasing fibrinopeptide A, and shows a lower activity on fibrinogen Bbeta (FGB), releasing fibrinopeptide B and other uncommon fibrinopeptides. Also shows low fibrinolytic activity compared to plasmin. Has high enzymatic activity on the substrates for activated protein C and factor XIa, and for thrombin. Shows a wide activity spectrum at different peptide sequences, with a preferential cleavage at Lys-|-Xaa over Arg-|-Xaa bonds. This is Snake venom serine protease HS114 from Bothrops jararaca (Jararaca).